A 131-amino-acid polypeptide reads, in one-letter code: Agouti-related protein (131 aa).

Residues 1–20 (MLTAMLLSCVLLLALPPTLG) form the signal peptide. Residues 21-81 (VQMGVAPLKG…VLDPQNRESR (61 aa)) constitute a propeptide that is removed on maturation. Intrachain disulfides connect C86-C101, C93-C107, C100-C118, C104-C128, and C109-C116. The region spanning 86–128 (CVRLHESCLGQQVPCCDPCATCYCRFFNAFCYCRKLGTATNLC) is the Agouti domain. An interaction with melanocortin receptors region spans residues 110 to 112 (RFF).

As to quaternary structure, interacts with melanocortin receptors MC3R, MC4R and MC5R. As to expression, expressed in arcuate nucleus and median eminence, adrenal gland (medulla), hypothalamus, testis, and lung.

The protein resides in the secreted. It localises to the golgi apparatus lumen. Plays a role in weight homeostasis. Involved in the control of feeding behavior through the central melanocortin system. Acts as alpha melanocyte-stimulating hormone antagonist by inhibiting cAMP production mediated by stimulation of melanocortin receptors within the hypothalamus and adrenal gland. Has very low activity with MC5R. Is an inverse agonist for MC3R and MC4R being able to suppress their constitutive activity. It promotes MC3R and MC4R endocytosis in an arrestin-dependent manner. In Mus musculus (Mouse), this protein is Agouti-related protein (Agrp).